Here is a 103-residue protein sequence, read N- to C-terminus: Large ribosomal subunit protein eL43 (103 aa).

This sequence belongs to the eukaryotic ribosomal protein eL43 family.

The polypeptide is Large ribosomal subunit protein eL43 (RPL37A) (Tetrahymena thermophila (strain SB210)).